Consider the following 309-residue polypeptide: GTP cyclohydrolase MptA 2 (309 aa).

This sequence belongs to the GTP cyclohydrolase IV family. Homodimer. Fe(2+) is required as a cofactor.

The catalysed reaction is GTP + H2O = 7,8-dihydroneopterin 2',3'-cyclic phosphate + formate + diphosphate + H(+). The protein operates within cofactor biosynthesis; 5,6,7,8-tetrahydromethanopterin biosynthesis. Its function is as follows. Converts GTP to 7,8-dihydro-D-neopterin 2',3'-cyclic phosphate, the first intermediate in the biosynthesis of coenzyme methanopterin. This chain is GTP cyclohydrolase MptA 2, found in Methanocella arvoryzae (strain DSM 22066 / NBRC 105507 / MRE50).